Consider the following 740-residue polypeptide: NAD(P)H-quinone oxidoreductase subunit 5, chloroplastic (740 aa).

16 helical membrane passes run 9 to 29 (WIIP…LLLI), 39 to 59 (IWAF…TKLA), 89 to 109 (IDPL…MVLI), 125 to 145 (FAYM…PNLI), 147 to 167 (IHIF…FWFT), 185 to 205 (GDFG…SFEF), 231 to 251 (AFLL…HVWL), 259 to 279 (TPIS…FLVA), 281 to 301 (LLPL…IGLI), 328 to 348 (LGYI…FHLI), 355 to 375 (ALLF…VGYS), 397 to 417 (TTFF…CFWS), 426 to 446 (WLYS…TAFY), 548 to 568 (TMLF…CIGI), 607 to 627 (FYSV…YGSV), and 719 to 739 (GRIS…LLLV).

The protein belongs to the complex I subunit 5 family. In terms of assembly, NDH is composed of at least 16 different subunits, 5 of which are encoded in the nucleus.

The protein resides in the plastid. Its subcellular location is the chloroplast thylakoid membrane. It catalyses the reaction a plastoquinone + NADH + (n+1) H(+)(in) = a plastoquinol + NAD(+) + n H(+)(out). It carries out the reaction a plastoquinone + NADPH + (n+1) H(+)(in) = a plastoquinol + NADP(+) + n H(+)(out). Its function is as follows. NDH shuttles electrons from NAD(P)H:plastoquinone, via FMN and iron-sulfur (Fe-S) centers, to quinones in the photosynthetic chain and possibly in a chloroplast respiratory chain. The immediate electron acceptor for the enzyme in this species is believed to be plastoquinone. Couples the redox reaction to proton translocation, and thus conserves the redox energy in a proton gradient. The polypeptide is NAD(P)H-quinone oxidoreductase subunit 5, chloroplastic (ndhF) (Nuphar advena (Common spatterdock)).